Reading from the N-terminus, the 190-residue chain is Small ribosomal subunit protein uS5 (190 aa).

The 64-residue stretch at 22 to 85 (FVDKLVHINR…ESAKRNLTRV (64 aa)) folds into the S5 DRBM domain.

This sequence belongs to the universal ribosomal protein uS5 family. Part of the 30S ribosomal subunit. Contacts proteins S4 and S8.

Functionally, with S4 and S12 plays an important role in translational accuracy. Its function is as follows. Located at the back of the 30S subunit body where it stabilizes the conformation of the head with respect to the body. The sequence is that of Small ribosomal subunit protein uS5 from Rhodopseudomonas palustris (strain BisB18).